The sequence spans 780 residues: Zinc finger and SCAN domain-containing protein 10 (780 aa).

Residues 1-38 (MLGESVPAAVEQEQLGEVKLEEEEAVSPEDPRRPESRL) form a disordered region. Basic and acidic residues predominate over residues 29 to 38 (EDPRRPESRL). The SCAN box domain occupies 56–126 (MGPRASLSRL…LLLEGIHREP (71 aa)). Disordered regions lie at residues 153 to 237 (GCAS…SRDQ) and 255 to 324 (KAWP…GSLL). Phosphoserine occurs at positions 162 and 208. Residues 202–224 (SSKQPLSPGPQKTFQALQESSPQ) show a composition bias toward polar residues. Threonine 268 carries the phosphothreonine modification. Positions 268–280 (TPDKEEFKQEEPK) are enriched in basic and acidic residues. C2H2-type zinc fingers lie at residues 347 to 370 (FICADCGVSFPQLSRLKAHQLRSH), 376 to 398 (FLCLCCGKSFGRSSILKLHMRTH), 404 to 426 (HACHLCGHRFRQSSHLSKHLLTH), 432 to 454 (FLCAECGRGFQRRASLVQHLLAH), 476 to 498 (VLCSHCGQSFQRRSSLKRHLRIH), 522 to 544 (FVCSDCGKAFRRSEHLVAHRRVH), 550 to 572 (FSCQACGRSFTQSSQLVSHQRVH), 578 to 600 (YACPQCGKRFVRRASLARHLLTH), 606 to 628 (HHCTQCGKSFGQTQDLARHQRSH), 634 to 656 (CRCSECGEGFSQSAHLARHQRIH), 662 to 684 (HACDTCGHRFRNSSNLARHRRSH), 690 to 712 (YSCQTCGRSFRRNAHLRRHLATH), 724 to 746 (QECVECGKSFSRSCNLLRHLLVH), and 752 to 774 (YSCTQCGRSFSRNSHLLRHLRTH). The residue at position 483 (glutamine 483) is an N5-methylglutamine. The interval 492–520 (KRHLRIHARDKDRRSSEGSGSRRRDSDRR) is disordered. Positions 498–520 (HARDKDRRSSEGSGSRRRDSDRR) are enriched in basic and acidic residues.

As to quaternary structure, interacts with POU5F1/OCT4 and SOX2. In terms of processing, methylated at Gln-483 by N6AMT1.

The protein resides in the nucleus. Embryonic stem (ES) cell-specific transcription factor required to maintain ES cell pluripotency. Can both activate and /or repress expression of target genes, depending on the context. Specifically binds the 5'-[GA]CGCNNGCG[CT]-3' DNA consensus sequence. Regulates expression of POU5F1/OCT4, ZSCAN4 and ALYREF/THOC4. This is Zinc finger and SCAN domain-containing protein 10 (ZSCAN10) from Homo sapiens (Human).